Consider the following 247-residue polypeptide: Adenosylcobinamide-GDP ribazoletransferase (247 aa).

The next 5 helical transmembrane spans lie at 34 to 54 (IITF…VFMV), 59 to 79 (CGAP…TGGF), 113 to 133 (GGLA…ELAL), 138 to 158 (ILAS…LLMY), and 194 to 214 (VLLP…AIFI).

The protein belongs to the CobS family. The cofactor is Mg(2+).

Its subcellular location is the cell inner membrane. The catalysed reaction is alpha-ribazole + adenosylcob(III)inamide-GDP = adenosylcob(III)alamin + GMP + H(+). It carries out the reaction alpha-ribazole 5'-phosphate + adenosylcob(III)inamide-GDP = adenosylcob(III)alamin 5'-phosphate + GMP + H(+). Its pathway is cofactor biosynthesis; adenosylcobalamin biosynthesis; adenosylcobalamin from cob(II)yrinate a,c-diamide: step 7/7. Joins adenosylcobinamide-GDP and alpha-ribazole to generate adenosylcobalamin (Ado-cobalamin). Also synthesizes adenosylcobalamin 5'-phosphate from adenosylcobinamide-GDP and alpha-ribazole 5'-phosphate. This Escherichia coli O81 (strain ED1a) protein is Adenosylcobinamide-GDP ribazoletransferase.